A 250-amino-acid chain; its full sequence is 5'-nucleotidase SurE (250 aa).

Residues Asp8, Asp9, Ser39, and Asn95 each coordinate a divalent metal cation.

Belongs to the SurE nucleotidase family. A divalent metal cation is required as a cofactor.

It localises to the cytoplasm. It catalyses the reaction a ribonucleoside 5'-phosphate + H2O = a ribonucleoside + phosphate. Nucleotidase that shows phosphatase activity on nucleoside 5'-monophosphates. This is 5'-nucleotidase SurE from Cupriavidus pinatubonensis (strain JMP 134 / LMG 1197) (Cupriavidus necator (strain JMP 134)).